The sequence spans 624 residues: Methyl-accepting chemotaxis protein McpG (624 aa).

A helical transmembrane segment spans residues 11-31; the sequence is ILLAASLIVILAFSLFTLYND. One can recognise a Cache domain in the interval 36–254; that stretch reads NAIREDLENY…GLPSANWYIG (219 aa). A helical transmembrane segment spans residues 272-292; the sequence is SAVIATVVAVVIIIGLLGLLI. Residues 293 to 347 enclose the HAMP domain; the sequence is RVLMQPLHTMTRAMEDIAEGEGDLTKRLHIHSHDEFGVLGNAFNRFVERIHSSIR. The Methyl-accepting transducer domain maps to 352–588; that stretch reads ATEQVNEVAL…AINMDINEIN (237 aa).

Belongs to the methyl-accepting chemotaxis (MCP) protein family.

Its subcellular location is the cell membrane. Functionally, chemotactic-signal transducers respond to changes in the concentration of attractants and repellents in the environment, transduce a signal from the outside to the inside of the cell, and facilitate sensory adaptation through the variation of the level of methylation. McpG is a specific gamma-aminobutyric acid (GABA) chemoreceptor that recognizes GABA over a wide range of environmental conditions. Contributes to attraction to and colonization of plant roots. The sequence is that of Methyl-accepting chemotaxis protein McpG from Pseudomonas putida (strain ATCC 47054 / DSM 6125 / CFBP 8728 / NCIMB 11950 / KT2440).